Reading from the N-terminus, the 322-residue chain is Retinal homeobox protein Rx-A (322 aa).

An Octapeptide motif motif is present at residues 32-39 (HSIEAILG). Positions 75–87 (TEEIHPQQEHLED) are enriched in basic and acidic residues. The segment at 75–136 (TEEIHPQQEH…KKKHRRNRTT (62 aa)) is disordered. Polar residues predominate over residues 100–117 (KTSSECLSPGLSTSNSDN). Positions 130 to 189 (HRRNRTTFTTYQLHELERAFEKSHYPDVYSREELAMKVNLPEVRVQVWFQNRRAKWRRQE) form a DNA-binding region, homeobox. Positions 302–315 (NSIASLRMKAKEHI) match the OAR motif. The Nuclear localization signal motif lies at 308-312 (RMKAK).

This sequence belongs to the paired homeobox family. Bicoid subfamily. In terms of tissue distribution, highly expressed in anterior neural plate followed by neural retina, pigmented epithelium, in pineal gland, diencephalon floor and epiphysis. At later stages, the neuroretina remains the primary site of expression. No expression in the developing lens and cornea.

It is found in the nucleus. Functionally, plays a critical role in eye formation by regulating the initial specification of retinal cells and/or their subsequent proliferation. This chain is Retinal homeobox protein Rx-A (rax-a), found in Xenopus laevis (African clawed frog).